Consider the following 365-residue polypeptide: Phospho-N-acetylmuramoyl-pentapeptide-transferase (365 aa).

10 consecutive transmembrane segments (helical) span residues 22–42 (YISVRIIMISITSLLITLALG), 74–94 (TMGGVLILSSVIISCLLWGDL), 95–115 (TSIYLWILILVVIFFGAIGFF), 134–154 (KFALQSIFSIVLAIVLFYLLS), 168–188 (SLYIPMGIVIFVVLAFFIING), 201–221 (GLAIVPVVLVAAGLGIYAYIE), 240–260 (LAEVAVFCAAVCGSGLAFLWF), 267–287 (VFMGDVGSLTLGAVLGVIAVM), 292–312 (LIFFIMGLLFVVEALSVMLQV), and 342–362 (KVVIRFWIISLILFLIGLAAI).

This sequence belongs to the glycosyltransferase 4 family. MraY subfamily. The cofactor is Mg(2+).

Its subcellular location is the cell inner membrane. It carries out the reaction UDP-N-acetyl-alpha-D-muramoyl-L-alanyl-gamma-D-glutamyl-meso-2,6-diaminopimeloyl-D-alanyl-D-alanine + di-trans,octa-cis-undecaprenyl phosphate = di-trans,octa-cis-undecaprenyl diphospho-N-acetyl-alpha-D-muramoyl-L-alanyl-D-glutamyl-meso-2,6-diaminopimeloyl-D-alanyl-D-alanine + UMP. It functions in the pathway cell wall biogenesis; peptidoglycan biosynthesis. Its function is as follows. Catalyzes the initial step of the lipid cycle reactions in the biosynthesis of the cell wall peptidoglycan: transfers peptidoglycan precursor phospho-MurNAc-pentapeptide from UDP-MurNAc-pentapeptide onto the lipid carrier undecaprenyl phosphate, yielding undecaprenyl-pyrophosphoryl-MurNAc-pentapeptide, known as lipid I. In Francisella tularensis subsp. novicida (strain U112), this protein is Phospho-N-acetylmuramoyl-pentapeptide-transferase.